A 207-amino-acid chain; its full sequence is Putative tributyltin chloride resistance protein (207 aa).

Positions 37 to 122 are slt-type domain; it reads NLPIELALMP…YHAIAALNLG (86 aa). The active site involves E49.

This sequence belongs to the transglycosylase Slt family.

This Alteromonas sp. (strain M-1) protein is Putative tributyltin chloride resistance protein (tbtA).